A 213-amino-acid chain; its full sequence is Penicillin-binding protein activator LpoB (213 aa).

The N-terminal stretch at 1–19 (MTKMSRYALITALAMFLAG) is a signal peptide. The N-palmitoyl cysteine moiety is linked to residue C20. The S-diacylglycerol cysteine moiety is linked to residue C20. Residues 28 to 74 (PVEEVKPAPEQPAEPQQPVPTVPSVPTIPQQPGPIEHEDQTAPPAPH) form a disordered region. A compositionally biased stretch (pro residues) spans 36 to 50 (PEQPAEPQQPVPTVP).

This sequence belongs to the LpoB family. Interacts with PBP1b.

Its subcellular location is the cell outer membrane. Its function is as follows. Regulator of peptidoglycan synthesis that is essential for the function of penicillin-binding protein 1B (PBP1b). This is Penicillin-binding protein activator LpoB from Escherichia coli O157:H7.